We begin with the raw amino-acid sequence, 356 residues long: Homoserine O-acetyltransferase (356 aa).

Residues 50 to 335 enclose the AB hydrolase-1 domain; that stretch reads NVILVCHALT…DEPYGHDAFL (286 aa). Catalysis depends on Ser146, which acts as the Nucleophile. A substrate-binding site is contributed by Arg215. Residues Asp302 and His331 contribute to the active site. Asp332 lines the substrate pocket.

The protein belongs to the AB hydrolase superfamily. MetX family. In terms of assembly, homodimer.

It localises to the cytoplasm. It catalyses the reaction L-homoserine + acetyl-CoA = O-acetyl-L-homoserine + CoA. It participates in amino-acid biosynthesis; L-methionine biosynthesis via de novo pathway; O-acetyl-L-homoserine from L-homoserine: step 1/1. Transfers an acetyl group from acetyl-CoA to L-homoserine, forming acetyl-L-homoserine. The protein is Homoserine O-acetyltransferase of Chlorobaculum tepidum (strain ATCC 49652 / DSM 12025 / NBRC 103806 / TLS) (Chlorobium tepidum).